A 300-amino-acid chain; its full sequence is Protease HtpX (300 aa).

Transmembrane regions (helical) follow at residues 4-24 (ILLF…TLRL) and 40-60 (SLLI…LFIS). Zn(2+) is bound at residue histidine 145. Glutamate 146 is an active-site residue. Histidine 149 contributes to the Zn(2+) binding site. The next 2 helical transmembrane spans lie at 153–173 (GDMV…MFFA) and 193–213 (LGFF…GLVA). Zn(2+) is bound at residue glutamate 225.

This sequence belongs to the peptidase M48B family. Zn(2+) is required as a cofactor.

It is found in the cell inner membrane. The protein is Protease HtpX of Chromohalobacter salexigens (strain ATCC BAA-138 / DSM 3043 / CIP 106854 / NCIMB 13768 / 1H11).